Consider the following 1363-residue polypeptide: Vascular endothelial growth factor receptor 3 (1363 aa).

An N-terminal signal peptide occupies residues 1–24 (MQPGAALNLRLWLCLGLLQGLANG). At 25–775 (YSMTPPTLNI…EGSEDKGSME (751 aa)) the chain is on the extracellular side. N-linked (GlcNAc...) asparagine glycosylation is found at asparagine 33, asparagine 104, asparagine 166, asparagine 251, asparagine 299, and asparagine 411. 7 Ig-like C2-type domains span residues 44 to 118 (GDSL…YIKA), 151 to 213 (KDSM…WGDQ), 230 to 326 (YDIQ…TEVI), 331 to 415 (PFIS…ISLE), 422 to 552 (PHIH…FYVT), 555 to 671 (PDGF…KYLS), and 678 to 764 (PRLT…ASVA). 2 disulfides stabilise this stretch: cysteine 51–cysteine 111 and cysteine 158–cysteine 206. Cysteine 252 and cysteine 310 are joined by a disulfide. Cystine bridges form between cysteine 445/cysteine 534, cysteine 466/cysteine 486, and cysteine 578/cysteine 653. N-linked (GlcNAc...) asparagine glycosylation is found at asparagine 515, asparagine 527, asparagine 582, asparagine 594, asparagine 683, and asparagine 690. An intrachain disulfide couples cysteine 699 to cysteine 751. Residue asparagine 758 is glycosylated (N-linked (GlcNAc...) asparagine). The helical transmembrane segment at 776 to 796 (IVILIGTGVIAVFFWVLLLLI) threads the bilayer. At 797–1363 (FCNMKRPAHA…GSTFFADSSY (567 aa)) the chain is on the cytoplasmic side. Residues tyrosine 830 and tyrosine 833 each carry the phosphotyrosine; by SRC modification. The region spanning 845 to 1173 (LHLGRVLGHG…DLVEILGDLL (329 aa)) is the Protein kinase domain. ATP-binding positions include 851–859 (LGHGAFGKV) and lysine 879. The active-site Proton acceptor is aspartate 1037. A Phosphotyrosine; by autocatalysis and SRC modification is found at tyrosine 1063. 4 positions are modified to phosphotyrosine; by autocatalysis: tyrosine 1068, tyrosine 1230, tyrosine 1231, and tyrosine 1265. The disordered stretch occupies residues 1288-1330 (ESRHRPEGSFSCKGPGQHMDIPRGHPDPQGRRRRPTQGAQGGK). Residues 1307–1317 (DIPRGHPDPQG) show a composition bias toward basic and acidic residues. Residues tyrosine 1333 and tyrosine 1337 each carry the phosphotyrosine; by autocatalysis and SRC modification. Phosphotyrosine; by autocatalysis is present on tyrosine 1363.

Belongs to the protein kinase superfamily. Tyr protein kinase family. CSF-1/PDGF receptor subfamily. In terms of assembly, interacts with VEGFC and VEGFD. Monomer in the absence of bound VEGFC or VEGFD. Homodimer in the presence of bound VEGFC or VEGFD. Can also form a heterodimer with KDR. Interacts with PTPN14; the interaction is enhanced by stimulation with VEGFC. Interacts with CRK, GRB2, PTK2/FAK1, SHC1, PIK3R1 and PTPN11/SHP-2. Identified in a complex with SRC and ITGB1. Post-translationally, autophosphorylated on tyrosine residues upon ligand binding. Autophosphorylation occurs in trans, i.e. one subunit of the dimeric receptor phosphorylates tyrosine residues on the other subunit. Phosphorylation in response to H(2)O(2) is mediated by a process that requires SRC and PRKCD activity. Phosphorylation at Tyr-1068 is required for autophosphorylation at additional tyrosine residues. Phosphorylation at Tyr-1063 and Tyr-1337 is important for interaction with CRK and subsequent activation of MAPK8. Phosphorylation at Tyr-1230, Tyr-1231 and Tyr-1337 is important for interaction with GRB2 and subsequent activation of the AKT1 and MAPK1/ERK2 and/or MAPK3/ERK1 signaling pathways. In response to endothelial cell adhesion onto collagen, can also be phosphorylated in the absence of FLT4 kinase activity by SRC. Expressed in adult lung and liver, and in fetal liver, brain, intestine and placenta.

The protein resides in the cell membrane. It is found in the cytoplasm. The protein localises to the nucleus. It catalyses the reaction L-tyrosyl-[protein] + ATP = O-phospho-L-tyrosyl-[protein] + ADP + H(+). Its activity is regulated as follows. Present in an inactive conformation in the absence of bound ligand. Binding of VEGFC or VEGFD leads to dimerization and activation by autophosphorylation on tyrosine residues. Its function is as follows. Tyrosine-protein kinase that acts as a cell-surface receptor for VEGFC and VEGFD, and plays an essential role in adult lymphangiogenesis and in the development of the vascular network and the cardiovascular system during embryonic development. Promotes proliferation, survival and migration of endothelial cells, and regulates angiogenic sprouting. Signaling by activated FLT4 leads to enhanced production of VEGFC, and to a lesser degree VEGFA, thereby creating a positive feedback loop that enhances FLT4 signaling. Modulates KDR signaling by forming heterodimers. Mediates activation of the MAPK1/ERK2, MAPK3/ERK1 signaling pathway, of MAPK8 and the JUN signaling pathway, and of the AKT1 signaling pathway. Phosphorylates SHC1. Mediates phosphorylation of PIK3R1, the regulatory subunit of phosphatidylinositol 3-kinase. Promotes phosphorylation of MAPK8 at 'Thr-183' and 'Tyr-185', and of AKT1 at 'Ser-473'. This Mus musculus (Mouse) protein is Vascular endothelial growth factor receptor 3 (Flt4).